The primary structure comprises 141 residues: Vesicle-associated membrane protein 4 (141 aa).

The segment at 1–51 is disordered; the sequence is MPPKFKRHLNDDDVTGSVKSERRNLLEDDSDEEEDFFLRGPSGPRFGPRND. The Cytoplasmic portion of the chain corresponds to 1 to 115; the sequence is MPPKFKRHLN…RRQMWWRGCK (115 aa). 2 positions are modified to phosphoserine: Ser17 and Ser30. A v-SNARE coiled-coil homology domain is found at 52–112; that stretch reads KIKHVQNQVD…KQLRRQMWWR (61 aa). The chain crosses the membrane as a helical; Anchor for type IV membrane protein span at residues 116–136; sequence IKAIMALVAAILLLVIIILIV. Over 137 to 141 the chain is Vesicular; the sequence is MKYRT.

The protein belongs to the synaptobrevin family. As to quaternary structure, identified in a complex containing STX6, STX12, VAMP4 and VTI1A. Interacts with BAIAP3; this interaction is increased in the presence of calcium.

The protein resides in the golgi apparatus. It localises to the trans-Golgi network membrane. In terms of biological role, involved in the pathway that functions to remove an inhibitor (probably synaptotagmin-4) of calcium-triggered exocytosis during the maturation of secretory granules. May be a marker for this sorting pathway that is critical for remodeling the secretory response of granule. The sequence is that of Vesicle-associated membrane protein 4 (VAMP4) from Homo sapiens (Human).